The following is a 144-amino-acid chain: uncharacterized protein (144 aa).

A compositionally biased stretch (basic residues) spans 124–133; it reads KALNRKKSKT. Residues 124–144 are disordered; it reads KALNRKKSKTKNGEKNGEGKS. The span at 134–144 shows a compositional bias: basic and acidic residues; sequence KNGEKNGEGKS.

This is an uncharacterized protein from Acidianus filamentous virus 1 (isolate United States/Yellowstone) (AFV-1).